The following is a 1186-amino-acid chain: Tricalbin-1 (1186 aa).

Residues 1–50 (MAKEDTGVTAPKKPETAQVANINGIDKLEPPKTKEETESSKSVSSEKAAH) are disordered. The Cytoplasmic segment spans residues 1–106 (MAKEDTGVTA…NIIPDSLYGD (106 aa)). The span at 26-39 (DKLEPPKTKEETES) shows a compositional bias: basic and acidic residues. The chain crosses the membrane as a helical span at residues 107–127 (WYHSVAIFFIGGVASFALGHY). Lys128 is a topological domain (extracellular). The chain crosses the membrane as a helical span at residues 129-149 (FSMGSAFFVIVITSLLYRTSA). Residues 150–1186 (KKYRGSIREL…HEMGEEETKF (1037 aa)) lie on the Cytoplasmic side of the membrane. Residues 172–375 (DYESLEWLNA…PPFSLQLNIP (204 aa)) form the SMP-LTD domain. 3 consecutive C2 domains span residues 366–487 (PPFS…RNLK), 512–636 (EKKL…IKIT), and 640–757 (RPVR…DKYE). Residues 795 to 822 (LEEIQDLDKVNKKKKALELRKSAIDEKK) adopt a coiled-coil conformation. Residues 976–1094 (PIDTKQLPAN…KVEGTTELDV (119 aa)) enclose the C2 4 domain. Phosphoserine is present on Ser1000. Ca(2+) is bound by residues Asp1008, Asp1014, Asp1064, Asp1066, Ser1069, and Asp1072.

It belongs to the tricalbin family. As to quaternary structure, interacts with TCB2 via its C-terminal domain. Ca(2+) serves as cofactor.

It localises to the cell membrane. The protein localises to the endoplasmic reticulum membrane. May play a role in membrane trafficking. The sequence is that of Tricalbin-1 (TCB1) from Saccharomyces cerevisiae (strain ATCC 204508 / S288c) (Baker's yeast).